The sequence spans 376 residues: Thymidine kinase (376 aa).

A disordered region spans residues 1–38 (MASYPCHQHASAFDQAARSRGHNNRRTALRPRRQQKAT). Residues 19–35 (SRGHNNRRTALRPRRQQ) are compositionally biased toward basic residues. Residue 56-63 (GPHGMGKT) coordinates ATP. Glu83 acts as the Proton acceptor in catalysis. Residues Tyr101 and Gln125 each coordinate substrate. Position 216 (Arg216) interacts with ATP. Arg222 is a substrate binding site.

This sequence belongs to the herpesviridae thymidine kinase family. As to quaternary structure, homodimer.

It carries out the reaction thymidine + ATP = dTMP + ADP + H(+). In terms of biological role, catalyzes the transfer of the gamma-phospho group of ATP to thymidine to generate dTMP in the salvage pathway of pyrimidine synthesis. The dTMP serves as a substrate for DNA polymerase during viral DNA replication. Allows the virus to be reactivated and to grow in non-proliferative cells lacking a high concentration of phosphorylated nucleic acid precursors. The sequence is that of Thymidine kinase from Homo sapiens (Human).